The primary structure comprises 373 residues: MHNAAPITRRKSTRIYVGKVPVGDGAPIAVQSMTNTRTTDVEATVNQIKALERVGVDIVRVSVPTMDAAEAFKLIKQQVNVPLVADIHFDYRIALKVAEYGVDCLRINPGNIGNEERIRSVVDCARYYNIPIRIGVNGGSLEKDIQEKYGEPTPEALLESAMRHVDILDRLNFDQFKVSVKASDVFLAVQSYRLLAARIDQPLHLGITEAGGARSGAVKSAIGLGLLLSEGIGDTLRISLAADPVEEVKVGFDILKSLRIRARGINFIACPTCSRQEFDVIGTVNALEQRLEDLITPMDVSIIGCVVNGPGEALVSTIGVTGGHNKSGFYEDGVRQRERFDNEQMIDQLEAKIRAKASMMDESQRITVNLVDK.

Residues Cys-270, Cys-273, Cys-305, and Glu-312 each coordinate [4Fe-4S] cluster.

It belongs to the IspG family. Requires [4Fe-4S] cluster as cofactor.

The enzyme catalyses (2E)-4-hydroxy-3-methylbut-2-enyl diphosphate + oxidized [flavodoxin] + H2O + 2 H(+) = 2-C-methyl-D-erythritol 2,4-cyclic diphosphate + reduced [flavodoxin]. It functions in the pathway isoprenoid biosynthesis; isopentenyl diphosphate biosynthesis via DXP pathway; isopentenyl diphosphate from 1-deoxy-D-xylulose 5-phosphate: step 5/6. In terms of biological role, converts 2C-methyl-D-erythritol 2,4-cyclodiphosphate (ME-2,4cPP) into 1-hydroxy-2-methyl-2-(E)-butenyl 4-diphosphate. The sequence is that of 4-hydroxy-3-methylbut-2-en-1-yl diphosphate synthase (flavodoxin) from Pectobacterium atrosepticum (strain SCRI 1043 / ATCC BAA-672) (Erwinia carotovora subsp. atroseptica).